Reading from the N-terminus, the 732-residue chain is MDPSMDTWDLSSPLISLWINRFYIYLGFAVSISLWICVQIVIKTQGRNLQEKSVPKAAQDLMTNGYVSLQEKDVFVSGVKIFYGSQTGTAKGFATVLAEAVTSLDLPVAIINLKEYDPDDHLIEEVTSKNVCVFLVATYTDGLPTESAEWFCKWLEEAAIDFRFGKTYLKGMRYAVFGLGNSAYASHFNKVGKNVDKWLWMLGAHRVMSRGEGDCDVVKSKHGSIEADFRAWKTKFISQLQALQKGERKKSCGGHCKKGKCESHQRGSEEREEGSHEQDELHHRDTEEEEPFESSSEEEFGGKDHQSLNSIVDVEDLGKIMDHVKKEKREKEQREEKSGLFRNMGRNEDGEIRAMITPALREALTKQGYQLIGSHSGVKLCRWTKSMLRGRGGCYKHTFYGIESHRCMETTPSLACANKCVFCWRHHTNPVGTEWRWKMDQPEMILKEAIENHQNMIKQFKGVPGVKAERFEEGMTVKHCALSLVGEPIMYPEINRFLKLLHQCKISSFLVTNAQFPAEIRNLEPVTQLYVSVDASTKDSLKKIDRPLFKDFWRRFLDSLKALAVKQQRTVYRLTLVKAWNVDELQAYAQLVSLGNPDFIEVKGVTYCGESSASSLTMAHVPWHEEVVQFVCELVDLIPDYEIACEHEHSNCLLIAHKKFKIGGEWWTWIDYNRFQELIQEYEDSSGSKTFSAKDYMARTPHWALFGANERGFDPKDTRHQRKNKSKAISGC.

The 159-residue stretch at 79 to 237 (VKIFYGSQTG…DFRAWKTKFI (159 aa)) folds into the Flavodoxin-like domain. Residues 85–89 (SQTGT) and 176–208 (VFGLGNSAYASHFNKVGKNVDKWLWMLGAHRVM) contribute to the FMN site. The tract at residues 248 to 312 (RKKSCGGHCK…KDHQSLNSIV (65 aa)) is disordered. Residues 259–286 (GKCESHQRGSEEREEGSHEQDELHHRDT) show a composition bias toward basic and acidic residues. Positions 287–299 (EEEEPFESSSEEE) are enriched in acidic residues. The 245-residue stretch at 400–644 (YGIESHRCME…VDLIPDYEIA (245 aa)) folds into the Radical SAM core domain. [4Fe-4S] cluster contacts are provided by cysteine 416, cysteine 420, and cysteine 423.

This sequence belongs to the TYW1 family. It depends on [4Fe-4S] cluster as a cofactor.

It catalyses the reaction N(1)-methylguanosine(37) in tRNA(Phe) + pyruvate + S-adenosyl-L-methionine = 4-demethylwyosine(37) in tRNA(Phe) + 5'-deoxyadenosine + L-methionine + CO2 + H2O. The protein operates within tRNA modification; wybutosine-tRNA(Phe) biosynthesis. In terms of biological role, probable component of the wybutosine biosynthesis pathway. Wybutosine is a hyper modified guanosine with a tricyclic base found at the 3'-position adjacent to the anticodon of eukaryotic phenylalanine tRNA. Catalyzes the condensation of N-methylguanine with 2 carbon atoms from pyruvate to form the tricyclic 4-demethylwyosine, an intermediate in wybutosine biosynthesis. This is S-adenosyl-L-methionine-dependent tRNA 4-demethylwyosine synthase TYW1 (TYW1) from Pongo abelii (Sumatran orangutan).